A 306-amino-acid polypeptide reads, in one-letter code: N-acetylmuramic acid 6-phosphate etherase (306 aa).

The SIS domain occupies 55-218 (AAATLLAGGR…STGAMIKIGK (164 aa)). The active-site Proton donor is Glu83. Glu114 is a catalytic residue.

This sequence belongs to the GCKR-like family. MurNAc-6-P etherase subfamily. In terms of assembly, homodimer.

It catalyses the reaction N-acetyl-D-muramate 6-phosphate + H2O = N-acetyl-D-glucosamine 6-phosphate + (R)-lactate. It participates in amino-sugar metabolism; 1,6-anhydro-N-acetylmuramate degradation. It functions in the pathway amino-sugar metabolism; N-acetylmuramate degradation. The protein operates within cell wall biogenesis; peptidoglycan recycling. Its function is as follows. Specifically catalyzes the cleavage of the D-lactyl ether substituent of MurNAc 6-phosphate, producing GlcNAc 6-phosphate and D-lactate. Together with AnmK, is also required for the utilization of anhydro-N-acetylmuramic acid (anhMurNAc) either imported from the medium or derived from its own cell wall murein, and thus plays a role in cell wall recycling. The chain is N-acetylmuramic acid 6-phosphate etherase from Erwinia tasmaniensis (strain DSM 17950 / CFBP 7177 / CIP 109463 / NCPPB 4357 / Et1/99).